The primary structure comprises 98 residues: MSREAMYDIVRAPLITEKATALSEKNQVAFKVAIDATKPEIKVAVETLFGVKVLGVNTLVQKGKTKRFKGRPGQRSDVKKAFVQLAEGQSIDLTAKLV.

Belongs to the universal ribosomal protein uL23 family. Part of the 50S ribosomal subunit. Contacts protein L29, and trigger factor when it is bound to the ribosome.

In terms of biological role, one of the early assembly proteins it binds 23S rRNA. One of the proteins that surrounds the polypeptide exit tunnel on the outside of the ribosome. Forms the main docking site for trigger factor binding to the ribosome. The sequence is that of Large ribosomal subunit protein uL23 from Gluconacetobacter diazotrophicus (strain ATCC 49037 / DSM 5601 / CCUG 37298 / CIP 103539 / LMG 7603 / PAl5).